The sequence spans 500 residues: Perfringolysin O (500 aa).

The first 28 residues, 1–28 (MIRFKKTKLIASIAMALCLFSQPVISFS), serve as a signal peptide directing secretion. Transmembrane regions (beta stranded) follow at residues 189–202 (KSQISSALNVNAKV), 209–218 (VDFNAVANNE), 287–296 (SKDVQAAFKA), and 304–316 (KNSQQYKDIYENS). A Conserved undecapeptide motif is present at residues 458–468 (ECTGLAWEWWR). A Cholesterol binding motif is present at residues 490–491 (TL).

The protein belongs to the cholesterol-dependent cytolysin family. In terms of assembly, modeling based on cryo-EM shows a homooligomeric pore complex containing 38-44 subunits; when inserted in the host membrane.

It localises to the secreted. It is found in the host cell membrane. A cholesterol-dependent toxin that causes cytolysis by forming pores in cholesterol-containing host membranes. After binding to target membranes, the protein assembles into a pre-pore complex. A major conformational change leads to insertion in the host membrane and formation of an oligomeric pore complex. Cholesterol is required for binding to host cell membranes, membrane insertion and pore formation; cholesterol binding is mediated by a Thr-Leu pair in the C-terminus. Can be reversibly inactivated by oxidation. This is Perfringolysin O (pfo) from Clostridium perfringens (strain 13 / Type A).